A 153-amino-acid chain; its full sequence is MKTTSLKPADVDKKWVVIDAEGLVVGRLASIVAMRLRGKHKPAYTPHVDCGDHVIVINADKVKFTGRKYDQKVYYHHTGYPGGIKERSAKFILEGRFPERVVEKAVERMLPRGPLFRQILGHLRVYKGAAHPHEAQQPQALDVGSLNRKNVSA.

The segment at 134 to 153 (EAQQPQALDVGSLNRKNVSA) is disordered.

The protein belongs to the universal ribosomal protein uL13 family. In terms of assembly, part of the 50S ribosomal subunit.

This protein is one of the early assembly proteins of the 50S ribosomal subunit, although it is not seen to bind rRNA by itself. It is important during the early stages of 50S assembly. This is Large ribosomal subunit protein uL13 from Methylorubrum extorquens (strain CM4 / NCIMB 13688) (Methylobacterium extorquens).